The chain runs to 1012 residues: Vacuolar membrane protease (1012 aa).

Topologically, residues 1–60 are cytoplasmic; that stretch reads MRRSTDPRNLLVRRGPLLVDGESAISELDPGFFPTGDAPKMSSTTRRRFNLIAFTPGPVT. The helical transmembrane segment at 61 to 81 threads the bilayer; the sequence is VISSLVYLALLIPLLLVHTIV. The Vacuolar portion of the chain corresponds to 82 to 432; the sequence is PSAPKSNPKG…SFAVFRLHTL (351 aa). Asparagine 159 carries N-linked (GlcNAc...) asparagine glycosylation. Zn(2+) is bound by residues histidine 215 and aspartate 227. The active-site Proton acceptor is the glutamate 261. Residues glutamate 262, glutamate 287, and histidine 360 each contribute to the Zn(2+) site. Residues 433–453 form a helical membrane-spanning segment; it reads FAISVTLLVVCPIVLFVIGII. The Cytoplasmic portion of the chain corresponds to 454–487; sequence LSKMDKMYLFSIHETIPETKEKVSVRGLRGLFRY. The helical transmembrane segment at 488–508 threads the bilayer; that stretch reads PIILVVSSGILIGLSYLLAKV. Topologically, residues 509-518 are vacuolar; it reads NPFIVHSSSY. Residues 519-539 traverse the membrane as a helical segment; the sequence is AVWSMMLSSWIFMTWFLSCIA. Residues 540 to 550 are Cytoplasmic-facing; that stretch reads DFFRPSALHRA. Residues 551–571 form a helical membrane-spanning segment; that stretch reads YTFTWQLLVMWVLLVISTVYV. Residues 572–575 lie on the Vacuolar side of the membrane; it reads NQHD. A helical transmembrane segment spans residues 576 to 596; the sequence is IAAGYFIVFYFAGTFLATLIS. The Cytoplasmic segment spans residues 597-710; sequence YLELFALPNK…WSASLPTWTW (114 aa). Residues 614–629 show a composition bias toward polar residues; it reads SQYPSRLGSNRSSRIL. The segment at 614–660 is disordered; that stretch reads SQYPSRLGSNRSSRILSPSADELPTGGDNNGEIYDGEEEPTESSSLL. A helical membrane pass occupies residues 711-731; sequence VLQFLFVGPVVIMFIGQLGLF. Residues 732 to 743 are Vacuolar-facing; it reads LTSAMNQVGADG. The chain crosses the membrane as a helical span at residues 744–764; the sequence is VGLLVVYIAIAVFSVLLLIPL. At 765 to 777 the chain is on the cytoplasmic side; sequence SPFIHRFTYHVPT. A helical membrane pass occupies residues 778–798; the sequence is FLLLVFIATLIYNLAAFPFSA. Residues 799-1012 are Vacuolar-facing; sequence ENRLKIFFVQ…DGLVEVSRGF (214 aa). Residues asparagine 842 and asparagine 878 are each glycosylated (N-linked (GlcNAc...) asparagine).

The protein belongs to the peptidase M28 family. Zn(2+) serves as cofactor.

It localises to the vacuole membrane. May be involved in vacuolar sorting and osmoregulation. This chain is Vacuolar membrane protease, found in Coccidioides posadasii (strain RMSCC 757 / Silveira) (Valley fever fungus).